The primary structure comprises 51 residues: uncharacterized protein (51 aa).

The segment at 1-51 (MARTNVKLCPPKRSKRPSNSRSKSTSHSNRRSLNSLRRTRTSRRSNNGKFT) is disordered. Residues 19–36 (NSRSKSTSHSNRRSLNSL) are compositionally biased toward low complexity.

This is an uncharacterized protein from Bdellovibrio bacteriovorus (Bacteriophage phiMH2K).